The sequence spans 145 residues: Snaclec salmorin subunit B (145 aa).

An N-terminal signal peptide occupies residues 1 to 23 (MGRFIFVSFGLLVVFVSLSGTGA). Intrachain disulfides connect C25–C36, C53–C141, and C118–C133. A C-type lectin domain is found at 32–142 (YEGHCYKLFN…CRMEAYFVCE (111 aa)). The Ca(2+) site is built by S64 and E70. E142 contributes to the Ca(2+) binding site.

Belongs to the snaclec family. In terms of assembly, heterodimer of subunits A and B; disulfide-linked. Expressed by the venom gland.

The protein localises to the secreted. Inhibits thrombin-induced fibrinogen clotting and factor Xa-induced prothrombin activation. Binds to thrombin and prothrombin exosites. In Gloydius brevicauda (Korean slamosa snake), this protein is Snaclec salmorin subunit B.